Here is a 397-residue protein sequence, read N- to C-terminus: Lysophospholipid transporter LplT (397 aa).

11 consecutive transmembrane segments (helical) span residues 16–36 (MMAVIVAQFLSAFGDNALLFA), 53–73 (VLQMVFVCAYILLAPFVGQVA), 91–111 (LGAVVIVFGGNPFVGYTLVGV), 139–159 (LMESSTIAAILIGSMAGGMLA), 164–184 (GAALGVCALAYAGAVGANLLI), 229–249 (WGAGVTLRFLLVLWVPVALGI), 257–277 (YLNAMVAVGIVAGAGAAAKLV), 282–302 (VSRCMPAGILIGIAVIFFSLQ), 304–324 (AALPAYLLLLLIGFFGGFFVV), 344–364 (IAVQNLGENTAMLLMLGLYSL), and 372–392 (VVGIGVGFGAIFALAIAGLWL).

This sequence belongs to the major facilitator superfamily. LplT (TC 2.A.1.42) family.

It is found in the cell inner membrane. Functionally, catalyzes the facilitated diffusion of 2-acyl-glycero-3-phosphoethanolamine (2-acyl-GPE) into the cell. This chain is Lysophospholipid transporter LplT, found in Cronobacter sakazakii (strain ATCC BAA-894) (Enterobacter sakazakii).